The following is a 259-amino-acid chain: Deoxyribose-phosphate aldolase (259 aa).

The active-site Proton donor/acceptor is Asp102. Lys166 (schiff-base intermediate with acetaldehyde) is an active-site residue. Lys200 acts as the Proton donor/acceptor in catalysis.

The protein belongs to the DeoC/FbaB aldolase family. DeoC type 2 subfamily.

It localises to the cytoplasm. It carries out the reaction 2-deoxy-D-ribose 5-phosphate = D-glyceraldehyde 3-phosphate + acetaldehyde. It participates in carbohydrate degradation; 2-deoxy-D-ribose 1-phosphate degradation; D-glyceraldehyde 3-phosphate and acetaldehyde from 2-deoxy-alpha-D-ribose 1-phosphate: step 2/2. Catalyzes a reversible aldol reaction between acetaldehyde and D-glyceraldehyde 3-phosphate to generate 2-deoxy-D-ribose 5-phosphate. The polypeptide is Deoxyribose-phosphate aldolase (Vibrio cholerae serotype O1 (strain ATCC 39315 / El Tor Inaba N16961)).